The chain runs to 249 residues: Glucosamine-6-phosphate deaminase (249 aa).

Asp67 serves as the catalytic Proton acceptor; for enolization step. Residue Asn136 is the For ring-opening step of the active site. His138 (proton acceptor; for ring-opening step) is an active-site residue. Residue Glu143 is the For ring-opening step of the active site.

This sequence belongs to the glucosamine/galactosamine-6-phosphate isomerase family. NagB subfamily.

It catalyses the reaction alpha-D-glucosamine 6-phosphate + H2O = beta-D-fructose 6-phosphate + NH4(+). It functions in the pathway amino-sugar metabolism; N-acetylneuraminate degradation; D-fructose 6-phosphate from N-acetylneuraminate: step 5/5. Its function is as follows. Catalyzes the reversible isomerization-deamination of glucosamine 6-phosphate (GlcN6P) to form fructose 6-phosphate (Fru6P) and ammonium ion. This chain is Glucosamine-6-phosphate deaminase, found in Clostridium botulinum (strain Eklund 17B / Type B).